Reading from the N-terminus, the 513-residue chain is Histidine ammonia-lyase (513 aa).

The 5-imidazolinone (Ala-Gly) cross-link spans 144–146 (ASG). S145 is subject to 2,3-didehydroalanine (Ser).

Belongs to the PAL/histidase family. In terms of processing, contains an active site 4-methylidene-imidazol-5-one (MIO), which is formed autocatalytically by cyclization and dehydration of residues Ala-Ser-Gly.

The protein resides in the cytoplasm. The catalysed reaction is L-histidine = trans-urocanate + NH4(+). It functions in the pathway amino-acid degradation; L-histidine degradation into L-glutamate; N-formimidoyl-L-glutamate from L-histidine: step 1/3. The chain is Histidine ammonia-lyase from Streptococcus pyogenes serotype M18 (strain MGAS8232).